Here is a 147-residue protein sequence, read N- to C-terminus: Ponticulin-like protein C2 (147 aa).

A signal peptide spans 1–20 (MKFTKPLLLLIVAIIASSNA). Asparagine 118 carries GPI-like-anchor amidated asparagine lipidation. N-linked (GlcNAc...) asparagine glycosylation occurs at asparagine 118. A propeptide spans 119-147 (SSESDSSDSTRIGASFALFALALLSMLAL) (removed in mature form).

This sequence belongs to the ponticulin family. The GPI-like-anchor contains a phosphoceramide group, rather than a phosphatidyl group.

Its subcellular location is the cell membrane. The chain is Ponticulin-like protein C2 (ponC2) from Dictyostelium discoideum (Social amoeba).